Here is a 476-residue protein sequence, read N- to C-terminus: Cysteine--tRNA ligase (476 aa).

Cys-28 contacts Zn(2+). A 'HIGH' region motif is present at residues 30–40 (PTVYDHTHLGH). Zn(2+) contacts are provided by Cys-208, His-233, and Glu-237. The 'KMSKS' region motif lies at 265–269 (KMSKS). Lys-268 contacts ATP.

Belongs to the class-I aminoacyl-tRNA synthetase family. It depends on Zn(2+) as a cofactor.

Its subcellular location is the cytoplasm. It carries out the reaction tRNA(Cys) + L-cysteine + ATP = L-cysteinyl-tRNA(Cys) + AMP + diphosphate. This is Cysteine--tRNA ligase from Methanococcus maripaludis (strain C6 / ATCC BAA-1332).